A 164-amino-acid polypeptide reads, in one-letter code: MERFLENAMYASRWLLAPVYFGLSLGLIALTIKFFQEIFHILPHIFSVSESDMILTLLSLVDMTLVGGLLVMVMFSGYENFVSQLDINEGKEKLSWLGKMDATSLKNKVAASIVAISSIHLLRVFMDAKNVPDNKLMWYVIIHLTFVLSAFVMGYLDRLTKVKH.

Helical transmembrane passes span 15–35, 53–73, 109–126, and 136–156; these read LLAPVYFGLSLGLIALTIKFF, MILTLLSLVDMTLVGGLLVMV, VAASIVAISSIHLLRVFM, and LMWYVIIHLTFVLSAFVMGYL.

The protein belongs to the UPF0114 family.

It is found in the cell membrane. The sequence is that of UPF0114 protein KPN78578_33570 from Klebsiella pneumoniae subsp. pneumoniae (strain ATCC 700721 / MGH 78578).